The sequence spans 3079 residues: Inhibitory regulator protein IRA2 (3079 aa).

Residues 392 to 554 are disordered; sequence NQNAHQGSSS…RASYDAHKTG (163 aa). Residues 399 to 416 are compositionally biased toward low complexity; it reads SSSPSSSSPSSPPSSSSS. Residues 417–442 show a composition bias toward polar residues; sequence DNNNQNIIAKSLSRQLSHHQSYIQQQ. Positions 449–477 are enriched in low complexity; that stretch reads SSWTTNSQSSTSLSSSTSNSTTTDFSTHT. The segment covering 488–497 has biased composition (polar residues); it reads DTPTMSNITI. Over residues 498-528 the composition is skewed to low complexity; sequence SASSLLSQTPTPTTQLQQRLNSAAAAAAAAA. A compositionally biased stretch (polar residues) spans 529–546; the sequence is SPSNSTPTGYTAEQQSRA. Thr635 is subject to Phosphothreonine. Disordered stretches follow at residues 867–898, 912–935, and 952–980; these read FKGS…PLGL, GSST…LSSD, and GPSS…VQRP. Low complexity-rich tracts occupy residues 873 to 894 and 921 to 934; these read SLCS…TPVS and NVNS…NLSS. Residues 961–980 show a composition bias toward polar residues; sequence IPTTLTSPPGTEKSSPVQRP. The region spanning 1717–1922 is the Ras-GAP domain; the sequence is NATHIVVAQL…DRIFRFLAEL (206 aa).

It localises to the cytoplasm. In terms of biological role, inhibitory regulator of the Ras-cyclic AMP pathway. Stimulates the GTPase activity of Ras proteins. The polypeptide is Inhibitory regulator protein IRA2 (IRA2) (Saccharomyces cerevisiae (strain ATCC 204508 / S288c) (Baker's yeast)).